We begin with the raw amino-acid sequence, 292 residues long: 4-hydroxy-tetrahydrodipicolinate synthase (292 aa).

T45 provides a ligand contact to pyruvate. The Proton donor/acceptor role is filled by Y133. K162 functions as the Schiff-base intermediate with substrate in the catalytic mechanism. I204 provides a ligand contact to pyruvate.

It belongs to the DapA family. As to quaternary structure, homotetramer; dimer of dimers.

The protein localises to the cytoplasm. It carries out the reaction L-aspartate 4-semialdehyde + pyruvate = (2S,4S)-4-hydroxy-2,3,4,5-tetrahydrodipicolinate + H2O + H(+). It participates in amino-acid biosynthesis; L-lysine biosynthesis via DAP pathway; (S)-tetrahydrodipicolinate from L-aspartate: step 3/4. In terms of biological role, catalyzes the condensation of (S)-aspartate-beta-semialdehyde [(S)-ASA] and pyruvate to 4-hydroxy-tetrahydrodipicolinate (HTPA). This Nitratidesulfovibrio vulgaris (strain DSM 19637 / Miyazaki F) (Desulfovibrio vulgaris) protein is 4-hydroxy-tetrahydrodipicolinate synthase.